Here is a 115-residue protein sequence, read N- to C-terminus: MSEYKQCIVTRDDLKLSKGKFAVQVAHAALSAAEWASKSDLEKWKEGGQKKIVLRVPTIKDLYELKEKARREGLPTALIQDAGLTEIPAGTVTVLGIGPAKEEVIDKVTRDLKLV.

This sequence belongs to the PTH2 family.

The protein localises to the cytoplasm. The enzyme catalyses an N-acyl-L-alpha-aminoacyl-tRNA + H2O = an N-acyl-L-amino acid + a tRNA + H(+). In terms of biological role, the natural substrate for this enzyme may be peptidyl-tRNAs which drop off the ribosome during protein synthesis. The sequence is that of Peptidyl-tRNA hydrolase from Methanosarcina acetivorans (strain ATCC 35395 / DSM 2834 / JCM 12185 / C2A).